The sequence spans 444 residues: tRNA modification GTPase MnmE (444 aa).

Residues R28, E86, and R126 each contribute to the (6S)-5-formyl-5,6,7,8-tetrahydrofolate site. Residues G224 to A368 form the TrmE-type G domain. N234 is a K(+) binding site. Residues N234–T239, S253–T259, and D278–G281 each bind GTP. S238 is a Mg(2+) binding site. K(+) is bound by residues S253, I255, and T258. T259 is a binding site for Mg(2+). K444 lines the (6S)-5-formyl-5,6,7,8-tetrahydrofolate pocket.

It belongs to the TRAFAC class TrmE-Era-EngA-EngB-Septin-like GTPase superfamily. TrmE GTPase family. Homodimer. Heterotetramer of two MnmE and two MnmG subunits. Requires K(+) as cofactor.

Its subcellular location is the cytoplasm. Functionally, exhibits a very high intrinsic GTPase hydrolysis rate. Involved in the addition of a carboxymethylaminomethyl (cmnm) group at the wobble position (U34) of certain tRNAs, forming tRNA-cmnm(5)s(2)U34. In Methylorubrum populi (strain ATCC BAA-705 / NCIMB 13946 / BJ001) (Methylobacterium populi), this protein is tRNA modification GTPase MnmE.